The following is a 175-amino-acid chain: MEQQRIEVVGKLGSTYGIRGWLRIYSSTEYAESIFDYQPWFLKIKGQWQPAELESWKHHNHELIAKLKNVDDRDAAQALTNVEIGVDLSVFPKLEEGDYYWHDLIGCQVVNLQGYTMGTVSEMMETGSNDVLVVRANVKDAFGKQERLIPFLYEKVVKRVDLTTKTIEVDWDAGF.

The PRC barrel domain maps to 96-175 (EGDYYWHDLI…TIEVDWDAGF (80 aa)).

It belongs to the RimM family. In terms of assembly, binds ribosomal protein uS19.

Its subcellular location is the cytoplasm. In terms of biological role, an accessory protein needed during the final step in the assembly of 30S ribosomal subunit, possibly for assembly of the head region. Essential for efficient processing of 16S rRNA. May be needed both before and after RbfA during the maturation of 16S rRNA. It has affinity for free ribosomal 30S subunits but not for 70S ribosomes. The sequence is that of Ribosome maturation factor RimM from Actinobacillus succinogenes (strain ATCC 55618 / DSM 22257 / CCUG 43843 / 130Z).